Here is a 204-residue protein sequence, read N- to C-terminus: 3-isopropylmalate dehydratase small subunit (204 aa).

The protein belongs to the LeuD family. LeuD type 1 subfamily. As to quaternary structure, heterodimer of LeuC and LeuD.

The enzyme catalyses (2R,3S)-3-isopropylmalate = (2S)-2-isopropylmalate. It functions in the pathway amino-acid biosynthesis; L-leucine biosynthesis; L-leucine from 3-methyl-2-oxobutanoate: step 2/4. Its function is as follows. Catalyzes the isomerization between 2-isopropylmalate and 3-isopropylmalate, via the formation of 2-isopropylmaleate. The chain is 3-isopropylmalate dehydratase small subunit from Chloroflexus aggregans (strain MD-66 / DSM 9485).